Consider the following 314-residue polypeptide: Thymidylate synthase (314 aa).

DUMP contacts are provided by residues R21 and 176-177; that span reads RR. C196 acts as the Nucleophile in catalysis. Residues 216–219, N227, and 257–259 contribute to the dUMP site; these read RSAD and HLY. A (6R)-5,10-methylene-5,6,7,8-tetrahydrofolate-binding site is contributed by D219. S313 contacts (6R)-5,10-methylene-5,6,7,8-tetrahydrofolate.

Belongs to the thymidylate synthase family. Bacterial-type ThyA subfamily. Homodimer.

The protein localises to the cytoplasm. The catalysed reaction is dUMP + (6R)-5,10-methylene-5,6,7,8-tetrahydrofolate = 7,8-dihydrofolate + dTMP. The protein operates within pyrimidine metabolism; dTTP biosynthesis. In terms of biological role, catalyzes the reductive methylation of 2'-deoxyuridine-5'-monophosphate (dUMP) to 2'-deoxythymidine-5'-monophosphate (dTMP) while utilizing 5,10-methylenetetrahydrofolate (mTHF) as the methyl donor and reductant in the reaction, yielding dihydrofolate (DHF) as a by-product. This enzymatic reaction provides an intracellular de novo source of dTMP, an essential precursor for DNA biosynthesis. This is Thymidylate synthase from Listeria innocua serovar 6a (strain ATCC BAA-680 / CLIP 11262).